Here is a 174-residue protein sequence, read N- to C-terminus: Guided entry of tail-anchored proteins factor 1 (174 aa).

The Lumenal portion of the chain corresponds to 1–8 (MSSAAADH). Residues 9-29 (WAWLLVLSFVFGCNVLRILLP) form a helical membrane-spanning segment. Residues 30 to 99 (SFSSFMSRVL…VKARTAQLAK (70 aa)) are Cytoplasmic-facing. Residues 39 to 94 (LQKDAEQESQMRAEIQDMKQELSTVNMMDEFARYARLERKINKMTDKLKTHVKART) are a coiled coil. An interaction with GET3/TRC40 region spans residues 39–97 (LQKDAEQESQMRAEIQDMKQELSTVNMMDEFARYARLERKINKMTDKLKTHVKARTAQL). A helical membrane pass occupies residues 100–120 (IKWVISVAFYVLQAALMISLI). Residues 121–148 (WKYYSVPVAVVPSKWITPLDRLVAFPTR) lie on the Lumenal side of the membrane. A helical membrane pass occupies residues 149–169 (VAGGVGITCWILVCNKVVAIV). Over 170-174 (LHPFS) the chain is Cytoplasmic.

The protein belongs to the WRB/GET1 family. In terms of assembly, component of the Golgi to ER traffic (GET) complex, which is composed of GET1/WRB, CAMLG/GET2 and GET3/TRC40. Within the complex, GET1 and CAMLG form a heterotetramer which is stabilized by phosphatidylinositol binding and which binds to the GET3 homodimer. Interacts with CAMLG (via C-terminus). GET3 shows a higher affinity for CAMLG than for GET1.

The protein localises to the endoplasmic reticulum membrane. In terms of biological role, required for the post-translational delivery of tail-anchored (TA) proteins to the endoplasmic reticulum (ER). Together with CAMLG/GET2, acts as a membrane receptor for soluble GET3/TRC40, which recognizes and selectively binds the transmembrane domain of TA proteins in the cytosol. Required to ensure correct topology and ER insertion of CAMLG. The sequence is that of Guided entry of tail-anchored proteins factor 1 from Homo sapiens (Human).